A 416-amino-acid polypeptide reads, in one-letter code: Trehalose synthase (416 aa).

This sequence belongs to the glycosyltransferase group 1 family. Glycosyltransferase 4 subfamily. As to quaternary structure, homodimer. Requires Mg(2+) as cofactor.

It carries out the reaction an NDP-alpha-D-glucose + D-glucose = alpha,alpha-trehalose + a ribonucleoside 5'-diphosphate + H(+). Inhibited by 20 mM Fe(3+) and Mn(2+). Partially inhibited by Zn(2+) and Ni(2+). Activity is slightly enhanced by 2 mM Fe (3+), Mn (2+), Ca(2+) or Li(+) and by 20 mM Mg(2+), Ca(2+) or Li(+). Its function is as follows. Synthesizes trehalose from ADP-glucose and glucose. The reaction is reversible, the equilibrium strongly favors trehalose synthesis. The polypeptide is Trehalose synthase (Rubrobacter xylanophilus (strain DSM 9941 / JCM 11954 / NBRC 16129 / PRD-1)).